Here is a 77-residue protein sequence, read N- to C-terminus: uncharacterized protein (77 aa).

The interval 54-77 (HHGRKHKEDMEARHEQLTKGGTIL) is disordered. The span at 59–70 (HKEDMEARHEQL) shows a compositional bias: basic and acidic residues.

This is an uncharacterized protein from Escherichia coli O157:H7.